The primary structure comprises 86 residues: YcgL domain-containing protein XC_4086 (86 aa).

The YcgL domain occupies 1–83 (MHAYVYKSQR…PKTVVLAGEC (83 aa)).

This chain is YcgL domain-containing protein XC_4086, found in Xanthomonas campestris pv. campestris (strain 8004).